The primary structure comprises 1086 residues: Sterol regulatory element-binding protein cleavage-activating protein (1086 aa).

The Cytoplasmic segment spans residues 1–35 (MRIFTLGKGRISRGYARQVNPSLFAKYSYCIANNP). A helical transmembrane segment spans residues 36–56 (WYFILVFTLLSITGIYSSLVA). Residues 57–229 (YQQSLYDQSL…TVVARIPDLT (173 aa)) are Lumenal-facing. N-linked (GlcNAc...) asparagine glycans are attached at residues N94 and N168. Residues 230–250 (VIYRWYLWVGFGVGLFAYLYL) form a helical membrane-spanning segment. Residues 233 to 391 (RWYLWVGFGV…GSFFLAVLSV (159 aa)) enclose the SSD domain. At 251–265 (SLVRLHDIRAKFGLT) the chain is on the cytoplasmic side. A helical transmembrane segment spans residues 266–286 (ATIFIQSGTAYFSTCSLLYFF). Residues 287 to 290 (ERTG) lie on the Lumenal side of the membrane. Residues 291–311 (PICPWPMAYYIIIFMDIENSF) traverse the membrane as a helical segment. The Cytoplasmic segment spans residues 312-337 (RLLRAVIASPQTKRVPSRIMEGFSST). A helical membrane pass occupies residues 338 to 358 (IIASFSSLLKKLLTLFVLSFF). Topologically, residues 359 to 367 (VYPLVQEFC) are lumenal. The helical transmembrane segment at 368-388 (LFLACSFVVSFLLHGSFFLAV) threads the bilayer. At 389–422 (LSVDIRRLELQDFLDSNSSNRNSKWWVPYLEYVR) the chain is on the cytoplasmic side. The ER export signal motif lies at 396-401 (LELQDF). Residues 423–443 (FMWSPWIIDNLGTVSFHMYVI) traverse the membrane as a helical segment. Over 444–544 (YLQLQSSTDI…FHDRRVWRWS (101 aa)) the chain is Lumenal. N454 carries N-linked (GlcNAc...) asparagine glycosylation. A helical membrane pass occupies residues 545–565 (TFFSILFAIDFAVGLLVKALL). Over 566 to 1086 (RGWSDHDELS…QRKRSGTIGC (521 aa)) the chain is Cytoplasmic. WD repeat units follow at residues 593–632 (HHQL…TKLV), 637–675 (QMPR…LMLQ), 680–727 (CKPN…EGAD), 736–776 (LSSP…WSPK), and 963–1009 (GHYN…KKHR). An interaction with sre1 region spans residues 640-1086 (RTLKAIALDP…QRKRSGTIGC (447 aa)).

Belongs to the WD repeat SCAP family. As to quaternary structure, forms a tight complex with scp1, composed of 4 copies of scp1 and 4 copies of sre1.

The protein resides in the endoplasmic reticulum membrane. The protein localises to the golgi apparatus membrane. Its function is as follows. Escort protein required for sre1 processing at low sterol as well as oxygen levels. May regulate export of the scp1/sre1 complex from the ER at low sterol or oxygen levels. 4-methyl sterols bound to scp1 may mask an ER export signal in scp1 leading to retention of the complex in the ER. Release of 4-methyl sterols may trigger a conformational change in the SSD domain of scp1 unmasking the ER export signal leading to recruitment into COPII-coated vesicles, transport to the Golgi complex, proteolytic cleavage of sre1 in the Golgi, release of the transcription factor fragment of sre1 from the membrane, its import into the nucleus and up-regulation of genes required for ergosterol biosynthesis as well as anaerobic growth. Binds 4-methyl sterols. The sequence is that of Sterol regulatory element-binding protein cleavage-activating protein from Schizosaccharomyces pombe (strain 972 / ATCC 24843) (Fission yeast).